The following is a 463-amino-acid chain: Lariat debranching enzyme (463 aa).

Residues Cys-8, His-10, Asp-33, and Asn-78 each coordinate a divalent metal cation. The interval 118–148 is lariat recognition loop; that stretch reads SGIYSAMDYKKGRYEGLPYNYKMLKSIYHTR. A divalent metal cation contacts are provided by His-168, His-220, and His-222. A disordered region spans residues 250-324; sequence SGFSMKGLNE…QVTKFLALDK (75 aa). Residues 256-267 show a composition bias toward polar residues; sequence GLNEPSQERLPV. Basic and acidic residues-rich tracts occupy residues 276-289 and 299-323; these read DEEGSNNEQEEKQD and CRKESCKKEPSLSSSDQVTKFLALD.

It belongs to the lariat debranching enzyme family. The cofactor is Fe(2+). Requires Zn(2+) as cofactor. Mn(2+) is required as a cofactor.

The protein resides in the nucleus. Its subcellular location is the cytoplasm. Its activity is regulated as follows. Active in presence of diverse metals including Fe(2+), Zn(2+) and Mn(2+). Binds two metal cations in two adjacent alpha and beta metal-binding pockets. In terms of biological role, cleaves the 2'-5' phosphodiester linkage at the branch point of lariat intron pre-mRNAs after splicing and converts them into linear molecules that are subsequently degraded, thereby facilitating ribonucleotide turnover. In Schizosaccharomyces pombe (strain 972 / ATCC 24843) (Fission yeast), this protein is Lariat debranching enzyme (dbr1).